Reading from the N-terminus, the 722-residue chain is Peroxisomal bifunctional enzyme (722 aa).

Residues 1–281 form an enoyl-CoA hydratase / isomerase region; the sequence is MAEYLRLPHS…FAEKSANKWS (281 aa). A2 is subject to Blocked amino end (Ala). K38 carries the N6-succinyllysine modification. G100 serves as a coordination point for substrate. Position 173 is an N6-acetyllysine; alternate (K173). K173 is subject to N6-succinyllysine; alternate. K182 carries the post-translational modification N6-succinyllysine. An N6-acetyllysine; alternate mark is found at K190 and K218. An N6-succinyllysine; alternate mark is found at K190 and K218. K241 bears the N6-succinyllysine mark. K249 is subject to N6-acetyllysine. The residue at position 253 (K253) is an N6-succinyllysine. At K275 the chain carries N6-acetyllysine; alternate. K275 bears the N6-succinyllysine; alternate mark. An N6-succinyllysine mark is found at K279, K289, and K330. The segment at 282-571 is 3-hydroxyacyl-CoA dehydrogenase; that stretch reads TPSGASWKTA…DMLCEAGRFG (290 aa). 3 positions are modified to N6-acetyllysine: K345, K359, and K463. An N6-succinyllysine modification is found at K531. Phosphothreonine is present on T547. K576 is modified (N6-succinyllysine). N6-acetyllysine; alternate occurs at positions 583, 590, and 709. Residues K583, K590, and K709 each carry the N6-succinyllysine; alternate modification. The short motif at 720–722 is the Microbody targeting signal element; it reads SKL. K721 is modified (N6-succinyllysine).

In the N-terminal section; belongs to the enoyl-CoA hydratase/isomerase family. The protein in the C-terminal section; belongs to the 3-hydroxyacyl-CoA dehydrogenase family. As to quaternary structure, monomer. Acetylated, leading to enhanced enzyme activity. Acetylation is enhanced by up to 80% after treatment either with trichostin A (TCA) or with nicotinamide (NAM) with highest increase on Lys-345. Acetylation and enzyme activity increased by about 1.5% on addition of fatty acids.

It localises to the peroxisome. The enzyme catalyses a (3S)-3-hydroxyacyl-CoA = a (2E)-enoyl-CoA + H2O. It catalyses the reaction a 4-saturated-(3S)-3-hydroxyacyl-CoA = a (3E)-enoyl-CoA + H2O. The catalysed reaction is a (3Z)-enoyl-CoA = a 4-saturated (2E)-enoyl-CoA. It carries out the reaction a (3E)-enoyl-CoA = a 4-saturated (2E)-enoyl-CoA. The enzyme catalyses a (3S)-3-hydroxyacyl-CoA + NAD(+) = a 3-oxoacyl-CoA + NADH + H(+). It catalyses the reaction (2S,3S)-3-hydroxy-2-methylbutanoyl-CoA = (2E)-2-methylbut-2-enoyl-CoA + H2O. The catalysed reaction is (3E,5Z)-tetradecadienoyl-CoA = (2E,5Z)-tetradecadienoyl-CoA. It carries out the reaction (3E,5Z)-octadienoyl-CoA = (2E,5Z)-octadienoyl-CoA. The enzyme catalyses (3S)-hydroxydecanoyl-CoA + NAD(+) = 3-oxodecanoyl-CoA + NADH + H(+). It catalyses the reaction (3E)-decenoyl-CoA = (2E)-decenoyl-CoA. The catalysed reaction is (3Z)-hexenoyl-CoA = (2E)-hexenoyl-CoA. It carries out the reaction (3E)-hexenoyl-CoA = (2E)-hexenoyl-CoA. The enzyme catalyses (3S)-hydroxydecanoyl-CoA = (2E)-decenoyl-CoA + H2O. It catalyses the reaction (3S)-hydroxyhexanoyl-CoA = (2E)-hexenoyl-CoA + H2O. The catalysed reaction is (3S)-hydroxyhexadecanoyl-CoA + NAD(+) = 3-oxohexadecanoyl-CoA + NADH + H(+). It carries out the reaction (3S)-hydroxyhexadecanoyl-CoA = (2E)-hexadecenoyl-CoA + H2O. The enzyme catalyses (2E)-hexadecenedioyl-CoA + H2O = (3S)-hydroxyhexadecanedioyl-CoA. It catalyses the reaction (3S)-hydroxyhexadecanedioyl-CoA + NAD(+) = 3-oxohexadecanedioyl-CoA + NADH + H(+). It participates in lipid metabolism; fatty acid beta-oxidation. Enzyme activity enhanced by acetylation. Functionally, peroxisomal trifunctional enzyme possessing 2-enoyl-CoA hydratase, 3-hydroxyacyl-CoA dehydrogenase, and delta 3, delta 2-enoyl-CoA isomerase activities. Catalyzes two of the four reactions of the long chain fatty acids peroxisomal beta-oxidation pathway. Can also use branched-chain fatty acids such as 2-methyl-2E-butenoyl-CoA as a substrate, which is hydrated into (2S,3S)-3-hydroxy-2-methylbutanoyl-CoA. Optimal isomerase for 2,5 double bonds into 3,5 form isomerization in a range of enoyl-CoA species. Also able to isomerize both 3-cis and 3-trans double bonds into the 2-trans form in a range of enoyl-CoA species. Regulates the amount of medium-chain dicarboxylic fatty acids which are essential regulators of all fatty acid oxidation pathways. Also involved in the degradation of long-chain dicarboxylic acids through peroxisomal beta-oxidation. This is Peroxisomal bifunctional enzyme from Rattus norvegicus (Rat).